The following is a 637-amino-acid chain: Biosynthetic arginine decarboxylase (637 aa).

N6-(pyridoxal phosphate)lysine is present on Lys-101. Phe-286–Tyr-296 contacts substrate.

It belongs to the Orn/Lys/Arg decarboxylase class-II family. SpeA subfamily. The cofactor is Mg(2+). Pyridoxal 5'-phosphate serves as cofactor.

It catalyses the reaction L-arginine + H(+) = agmatine + CO2. It functions in the pathway amine and polyamine biosynthesis; agmatine biosynthesis; agmatine from L-arginine: step 1/1. Functionally, catalyzes the biosynthesis of agmatine from arginine. The sequence is that of Biosynthetic arginine decarboxylase from Shewanella sediminis (strain HAW-EB3).